The following is a 220-amino-acid chain: MSDEKNKFTDASFENCDLKNPVDRDTLKKATDEFLKTHEAEIHSEVKEENNEVSDPLAALQDENKELKDQLLRLVADMENLRRRTARDVADAKAYSIANFARDMLSVSDNLNRALEAIPEGAKENDAGLKTLAEGVEMTERAMIAALERHGVQKIYPEGQKFDPHFHQAMFEIPNCDVPDNTVQQVVQAGYIIGERVLRPAIVGVAKGGTKGVPVESGSA.

It belongs to the GrpE family. In terms of assembly, homodimer.

The protein resides in the cytoplasm. In terms of biological role, participates actively in the response to hyperosmotic and heat shock by preventing the aggregation of stress-denatured proteins, in association with DnaK and GrpE. It is the nucleotide exchange factor for DnaK and may function as a thermosensor. Unfolded proteins bind initially to DnaJ; upon interaction with the DnaJ-bound protein, DnaK hydrolyzes its bound ATP, resulting in the formation of a stable complex. GrpE releases ADP from DnaK; ATP binding to DnaK triggers the release of the substrate protein, thus completing the reaction cycle. Several rounds of ATP-dependent interactions between DnaJ, DnaK and GrpE are required for fully efficient folding. This is Protein GrpE from Bartonella quintana (strain Toulouse) (Rochalimaea quintana).